Consider the following 155-residue polypeptide: Large-conductance mechanosensitive channel (155 aa).

The next 3 helical transmembrane spans lie at 16 to 36, 40 to 60, and 88 to 108; these read VVDMAVGIIIGGAFGAIVNNL, VILPPLGLLIGGVDFSSLYII, and GVFLNSVFSFVIMAFAVFLLV.

The protein belongs to the MscL family. As to quaternary structure, homopentamer.

Its subcellular location is the cell inner membrane. Channel that opens in response to stretch forces in the membrane lipid bilayer. May participate in the regulation of osmotic pressure changes within the cell. This Chlorobium chlorochromatii (strain CaD3) protein is Large-conductance mechanosensitive channel.